A 125-amino-acid polypeptide reads, in one-letter code: Small ribosomal subunit protein uS12 (125 aa).

A disordered region spans residues 9 to 28 (RSERSKLKKKTKSPALKQCP). Aspartate 89 is modified (3-methylthioaspartic acid). The disordered stretch occupies residues 104–125 (AQGVKDRKQGRSKYGTKRPKKA). Basic residues predominate over residues 113–125 (GRSKYGTKRPKKA).

The protein belongs to the universal ribosomal protein uS12 family. As to quaternary structure, part of the 30S ribosomal subunit. Contacts proteins S8 and S17. May interact with IF1 in the 30S initiation complex.

In terms of biological role, with S4 and S5 plays an important role in translational accuracy. Interacts with and stabilizes bases of the 16S rRNA that are involved in tRNA selection in the A site and with the mRNA backbone. Located at the interface of the 30S and 50S subunits, it traverses the body of the 30S subunit contacting proteins on the other side and probably holding the rRNA structure together. The combined cluster of proteins S8, S12 and S17 appears to hold together the shoulder and platform of the 30S subunit. This is Small ribosomal subunit protein uS12 from Rippkaea orientalis (strain PCC 8801 / RF-1) (Cyanothece sp. (strain PCC 8801)).